The chain runs to 231 residues: Probable caffeoyl-CoA O-methyltransferase 2 (231 aa).

Residues Thr-53, Asp-75, 77 to 78 (GV), Ser-83, Asp-101, Ala-130, Asp-152, Asp-154, and Tyr-161 each bind S-adenosyl-L-methionine. A divalent metal cation is bound at residue Asp-152. Residues Asp-178 and Asn-179 each coordinate a divalent metal cation.

This sequence belongs to the class I-like SAM-binding methyltransferase superfamily. Cation-dependent O-methyltransferase family. CCoAMT subfamily.

It carries out the reaction (E)-caffeoyl-CoA + S-adenosyl-L-methionine = (E)-feruloyl-CoA + S-adenosyl-L-homocysteine + H(+). The chain is Probable caffeoyl-CoA O-methyltransferase 2 (omt6) from Dictyostelium discoideum (Social amoeba).